We begin with the raw amino-acid sequence, 99 residues long: Large ribosomal subunit protein uL23 (99 aa).

The protein belongs to the universal ribosomal protein uL23 family. In terms of assembly, part of the 50S ribosomal subunit. Contacts protein L29, and trigger factor when it is bound to the ribosome.

One of the early assembly proteins it binds 23S rRNA. One of the proteins that surrounds the polypeptide exit tunnel on the outside of the ribosome. Forms the main docking site for trigger factor binding to the ribosome. In Ectopseudomonas mendocina (strain ymp) (Pseudomonas mendocina), this protein is Large ribosomal subunit protein uL23.